The chain runs to 2476 residues: Non-reducing polyketide synthase pkdA (2476 aa).

The segment at 22–230 (PNLNDAYLQS…VISEARLATL (209 aa)) is N-terminal acylcarrier protein transacylase domain (SAT). C142 serves as the catalytic Nucleophile; for transacylase activity. H261 (proton donor/acceptor; for transacylase activity) is an active-site residue. Residues 388–805 (DESIAVVGMA…GSNASLVVTQ (418 aa)) form the Ketosynthase family 3 (KS3) domain. Active-site for beta-ketoacyl synthase activity residues include C554, H689, and H728. The tract at residues 919 to 1204 (FGGQRSSFVG…GSGVTNLASR (286 aa)) is malonyl-CoA:ACP transacylase (MAT). The segment at 1290–1417 (QKGLWTFVGY…GRITFQTPKQ (128 aa)) is N-terminal hotdog fold. The 303-residue stretch at 1290 to 1592 (QKGLWTFVGY…FVEVSIAGMS (303 aa)) folds into the PKS/mFAS DH domain. The product template (PT) domain stretch occupies residues 1321-1590 (YVSAHVIAQT…LHFVEVSIAG (270 aa)). The Proton acceptor; for dehydratase activity role is filled by H1325. Residues 1445-1592 (QTIQGSRNIY…FVEVSIAGMS (148 aa)) form a C-terminal hotdog fold region. Catalysis depends on D1501, which acts as the Proton donor; for dehydratase activity. The interval 1626–1649 (DVSKNEKDAKAPSKKKESTSKSPG) is disordered. One can recognise a Carrier domain in the interval 1650–1724 (HDILARVRTL…SLVKCIGANM (75 aa)). S1684 carries the O-(pantetheine 4'-phosphoryl)serine modification. The segment at 1727–1766 (SDTSRTGDDSSDDLETASAESETSSGINNEDSHNIDRQQI) is disordered. The span at 1742–1751 (TASAESETSS) shows a compositional bias: low complexity. Residues 1881–2030 (ELLRQYPEHA…DCEKTPSSHL (150 aa)) are methyltransferase (CMeT) domain. Residues 2094-2340 (VTGATGSLGS…SWCPVDDVAA (247 aa)) are NADPH-binding domain.

Pantetheine 4'-phosphate is required as a cofactor.

It carries out the reaction propanoyl-CoA + 3 malonyl-CoA + AH2 + 2 S-adenosyl-L-methionine + H(+) = 2-ethyl-4,6-dihydroxy-3,5-dimethylbenzaldehyde + A + 2 S-adenosyl-L-homocysteine + 3 CO2 + 4 CoA + H2O. It participates in secondary metabolite biosynthesis. Functionally, non-reducing polyketide synthase that synthesizes 6-ethyl-2,4-dihydroxy-3,5-dimethylbenzaldehyde via condensation of one propanoyl-CoA starter unit with 3 malonyl-CoA units, as well as 2 methylation steps. The chain is Non-reducing polyketide synthase pkdA from Emericella nidulans (strain FGSC A4 / ATCC 38163 / CBS 112.46 / NRRL 194 / M139) (Aspergillus nidulans).